Reading from the N-terminus, the 989-residue chain is ATP-dependent 6-phosphofructokinase subunit alpha (989 aa).

The interval 1–585 (MPEPSISALS…SYESFLSVSK (585 aa)) is N-terminal catalytic PFK domain 1. ATP-binding positions include Gly220, 283-284 (RS), and 313-316 (GDGS). Mg(2+) is bound at residue Asp314. Beta-D-fructose 6-phosphate is bound by residues 359-361 (SID), Arg396, 403-405 (MGR), Glu460, Arg487, and 493-496 (HVQR). Residue Asp361 is the Proton acceptor of the active site. Residues 586-599 (YDDGSYLVPESSRL) are interdomain linker. The interval 600–989 (NIAIIHVGAP…LSGRLSIRTT (390 aa)) is C-terminal regulatory PFK domain 2. Beta-D-fructose 2,6-bisphosphate-binding positions include Arg670, 727–731 (TVSNN), Arg765, 772–774 (QGG), Glu832, Arg858, 864–867 (HVQQ), and Arg963.

Belongs to the phosphofructokinase type A (PFKA) family. ATP-dependent PFK group I subfamily. Eukaryotic two domain clade 'E' sub-subfamily. Heterododecamer of 4 alpha, 4 beta and 4 gamma chains. The gamma chain bridges the N-terminal halves of the alpha and beta subunits. Mg(2+) serves as cofactor.

The protein resides in the cytoplasm. The enzyme catalyses beta-D-fructose 6-phosphate + ATP = beta-D-fructose 1,6-bisphosphate + ADP + H(+). It participates in carbohydrate degradation; glycolysis; D-glyceraldehyde 3-phosphate and glycerone phosphate from D-glucose: step 3/4. With respect to regulation, allosterically activated by ADP, AMP, or fructose 2,6-bisphosphate, and allosterically inhibited by ATP or citrate. Its function is as follows. Catalyzes the phosphorylation of D-fructose 6-phosphate to fructose 1,6-bisphosphate by ATP, the first committing step of glycolysis. Involved in the modulation of glucose-induced microautophagy of peroxisomes independent of its ability to metabolize glucose intermediates. This chain is ATP-dependent 6-phosphofructokinase subunit alpha (PFK1), found in Komagataella phaffii (strain GS115 / ATCC 20864) (Yeast).